The primary structure comprises 214 residues: MMLDPINHHFQAHEEAYYSRFFNEQRGLHMIKVLPGGVYVSDQEELICTGLGSCVSACIWDPVKRVGGMNHFLLPFHNHFEEKHWHADELLSGASRYGSYAMEMLLNQLLSLGARRERLRMKLFGGAQMMGFHSMIGEKNVEFVLHYAEQEGLEVVAYDLGGLEPRKIMFDPLTGKAWLKRIPFAEINHLRREEERYAHTLEKQTDNDSEVELF.

It belongs to the CheD family.

The enzyme catalyses L-glutaminyl-[protein] + H2O = L-glutamyl-[protein] + NH4(+). Functionally, probably deamidates glutamine residues to glutamate on methyl-accepting chemotaxis receptors (MCPs), playing an important role in chemotaxis. The sequence is that of Probable chemoreceptor glutamine deamidase CheD from Vibrio vulnificus (strain CMCP6).